The primary structure comprises 304 residues: Pseudouridine-5'-phosphate glycosidase (304 aa).

The active-site Proton donor is the E25. Substrate is bound by residues K86 and V106. Residue D138 participates in Mn(2+) binding. 140 to 142 (SAD) lines the substrate pocket. Residue K159 is the Nucleophile of the active site.

The protein belongs to the pseudouridine-5'-phosphate glycosidase family. As to quaternary structure, homotrimer. Mn(2+) serves as cofactor.

It carries out the reaction D-ribose 5-phosphate + uracil = psi-UMP + H2O. Catalyzes the reversible cleavage of pseudouridine 5'-phosphate (PsiMP) to ribose 5-phosphate and uracil. Functions biologically in the cleavage direction, as part of a pseudouridine degradation pathway. The chain is Pseudouridine-5'-phosphate glycosidase from Lysinibacillus sphaericus (strain C3-41).